The following is a 65-amino-acid chain: Small ribosomal subunit protein eS17 (65 aa).

Belongs to the eukaryotic ribosomal protein eS17 family.

The sequence is that of Small ribosomal subunit protein eS17 from Archaeoglobus fulgidus (strain ATCC 49558 / DSM 4304 / JCM 9628 / NBRC 100126 / VC-16).